The following is a 550-amino-acid chain: Zinc finger protein 426 (550 aa).

The KRAB domain occupies 39–110; the sequence is VSFEDVIVDF…KIVFPEWKLQ (72 aa). C2H2-type zinc fingers lie at residues 219-241, 274-296, 302-324, 330-352, 358-380, 386-408, 414-436, 442-464, 470-492, 498-522, and 528-550; these read FECSDCGKSFMSQSHLQTHQRTH, HRCKECGKGYRYPAYLNIHMRTH, YECKECGKAFNYSNSFQIHGRTH, YVCSQCGKAFTQHSGLSIHVRSH, YGCKECGKAFLTSSRLIQHIRTH, FVCVKCGKAFAISSNLNGHLKLH, CECKICGKAFGYLSCLNNHMRTH, YTCKECGKAFNYSTHLKIHMRIH, YECKQCGKAFSHSTSFQIHERTH, YECKECGKAFICPSSFRIHEISHTH, and YKCQQCGKAYSHPRSLRRHERIH.

The protein resides in the nucleus. May be involved in transcriptional regulation. The sequence is that of Zinc finger protein 426 (Znf426) from Mus musculus (Mouse).